Reading from the N-terminus, the 279-residue chain is Sulfur carrier protein FdhD (279 aa).

The Cysteine persulfide intermediate role is filled by Cys-112.

This sequence belongs to the FdhD family.

It is found in the cytoplasm. Functionally, required for formate dehydrogenase (FDH) activity. Acts as a sulfur carrier protein that transfers sulfur from IscS to the molybdenum cofactor prior to its insertion into FDH. In Nocardia farcinica (strain IFM 10152), this protein is Sulfur carrier protein FdhD.